Consider the following 334-residue polypeptide: N-acetyl-gamma-glutamyl-phosphate reductase (334 aa).

Cys-154 is an active-site residue.

The protein belongs to the NAGSA dehydrogenase family. Type 1 subfamily.

It is found in the cytoplasm. The enzyme catalyses N-acetyl-L-glutamate 5-semialdehyde + phosphate + NADP(+) = N-acetyl-L-glutamyl 5-phosphate + NADPH + H(+). It participates in amino-acid biosynthesis; L-arginine biosynthesis; N(2)-acetyl-L-ornithine from L-glutamate: step 3/4. Its function is as follows. Catalyzes the NADPH-dependent reduction of N-acetyl-5-glutamyl phosphate to yield N-acetyl-L-glutamate 5-semialdehyde. The sequence is that of N-acetyl-gamma-glutamyl-phosphate reductase from Yersinia pestis.